The sequence spans 547 residues: Protein RBL (547 aa).

WD repeat units follow at residues 21–60, 65–104, 214–253, 285–332, and 334–373; these read LEHGVIKCVAFNHRGSLLAAGCADGGCVIWDFETRGIAKE, DCSAAITSVSWSKYGHRLLVSAADKSLTLWDVSTGEKIAR, SGAAPVKNIVFSRNGQYLLTNSHDRTIRIYENLLPAKNVL, EFQD…VKIL, and GPKEALIDLAWHPVHPIIVSVSLAGLVYIWAKDYTENWSA. The disordered stretch occupies residues 466 to 547; sequence SPASEEAGQN…GGDDDDDAYY (82 aa). Over residues 499-511 the composition is skewed to basic and acidic residues; sequence SEKAMELQAEKAK. The segment covering 530–547 has biased composition (acidic residues); the sequence is QETDDSINGGDDDDDAYY.

Part of a complex composed of TRO, RBL and WDR5A. Interacts with TRO and WDR5A, but not with WDR5B. This complex is formed during both vegetative and reproductive development. Strongly expressed in root tips, shoot apices, vascular tissues, developing embryos and endosperms.

It localises to the nucleus. In terms of biological role, promotes the expression of FLC and FLC homologs to repress the floral transition. Promotes WRKY70 and LTP7 genes epigenetic methylation (e.g. H3K4me3) and subsequent expression. The chain is Protein RBL from Arabidopsis thaliana (Mouse-ear cress).